The sequence spans 128 residues: 14.7 kDa protein (128 aa).

The segment at 65–94 (CFDCGAYLYDDHVCKRFTSRSNSDCLSVIH) adopts a C4-type zinc-finger fold.

Functionally, may act as a regulatory factor during viral transcription. This Shallot virus X (ShVX) protein is 14.7 kDa protein.